The sequence spans 450 residues: Probable galactarate/D-glucarate transporter GudP (450 aa).

Over 1-20 the chain is Cytoplasmic; it reads MSSLSQAASSVEKRTNARYW. A helical membrane pass occupies residues 21–41; it reads IVVMLFIVTSFNYGDRATLSI. Topologically, residues 42-58 are periplasmic; that stretch reads AGSEMAKDIGLDPVGMG. A helical membrane pass occupies residues 59 to 79; it reads YVFSAFSWAYVIGQIPGGWLL. The Cytoplasmic portion of the chain corresponds to 80–85; it reads DRFGSK. A helical membrane pass occupies residues 86–105; the sequence is RVYFWSIFIWSMFTLLQGFV. The Periplasmic segment spans residues 106 to 109; the sequence is DIFS. A helical transmembrane segment spans residues 110-132; sequence GFGIIVALFTLRFLVGLAEAPSF. Topologically, residues 133 to 153 are cytoplasmic; it reads PGNSRIVAAWFPAQERGTAVS. The chain crosses the membrane as a helical span at residues 154–174; sequence IFNSAQYFATVIFAPIMGWLT. At 175–176 the chain is on the periplasmic side; it reads HE. The chain crosses the membrane as a helical span at residues 177–197; sequence VGWSHVFFFMGGLGIVISFIW. The Cytoplasmic portion of the chain corresponds to 198–254; sequence LKVIHEPNQHPGVNKKELEYIAAGGALINMDQQNTKVKVPFSVKWGQIKQLLGSRMM. Residues 255-275 form a helical membrane-spanning segment; sequence IGVYIGQYCINALTYFFITWF. At 276-290 the chain is on the periplasmic side; the sequence is PVYLVQARGMSILKA. Residues 291-311 traverse the membrane as a helical segment; the sequence is GFVASVPAVCGFIGGVLGGII. At 312 to 329 the chain is on the cytoplasmic side; the sequence is SDWLMRRTGSLNIARKTP. The helical transmembrane segment at 330-350 threads the bilayer; sequence IVMGMLLSMVMVFCNYVNVEW. Position 351 (Met351) is a topological domain, periplasmic. A helical membrane pass occupies residues 352-372; it reads IIGFMALAFFGKGIGALGWAV. Over 373–387 the chain is Cytoplasmic; it reads MADTAPKEISGLSGG. A helical membrane pass occupies residues 388–408; that stretch reads LFNMFGNISGIVTPIAIGYIV. At 409–415 the chain is on the periplasmic side; sequence GTTGSFN. A helical membrane pass occupies residues 416-436; the sequence is GALIYVGVHALIAVLSYLVLV. The Cytoplasmic portion of the chain corresponds to 437–450; sequence GDIKRIELKPVAGQ.

It belongs to the major facilitator superfamily. Phthalate permease family.

The protein localises to the cell inner membrane. The catalysed reaction is galactarate(in) + H(+)(in) = galactarate(out) + H(+)(out). It carries out the reaction D-glucarate(in) + H(+)(in) = D-glucarate(out) + H(+)(out). The enzyme catalyses (R)-glycerate(in) + H(+)(in) = (R)-glycerate(out) + H(+)(out). Its function is as follows. Probably involved in the uptake of galactarate and/or D-glucarate. May also transport D-glycerate. In Escherichia coli (strain K12), this protein is Probable galactarate/D-glucarate transporter GudP.